We begin with the raw amino-acid sequence, 37 residues long: Cytochrome b6-f complex subunit 7 (37 aa).

Residues 11–29 (AVILMVLVLFGLAWGFLIL) traverse the membrane as a helical segment.

The protein belongs to the PetM family. As to quaternary structure, the 4 large subunits of the cytochrome b6-f complex are cytochrome b6, subunit IV (17 kDa polypeptide, PetD), cytochrome f and the Rieske protein, while the 4 small subunits are PetG, PetL, PetM and PetN. The complex functions as a dimer.

It localises to the cellular thylakoid membrane. In terms of biological role, component of the cytochrome b6-f complex, which mediates electron transfer between photosystem II (PSII) and photosystem I (PSI), cyclic electron flow around PSI, and state transitions. This Crocosphaera subtropica (strain ATCC 51142 / BH68) (Cyanothece sp. (strain ATCC 51142)) protein is Cytochrome b6-f complex subunit 7.